The sequence spans 269 residues: 2-dehydro-3-deoxyphosphooctonate aldolase (269 aa).

It belongs to the KdsA family.

The protein resides in the cytoplasm. It catalyses the reaction D-arabinose 5-phosphate + phosphoenolpyruvate + H2O = 3-deoxy-alpha-D-manno-2-octulosonate-8-phosphate + phosphate. It participates in carbohydrate biosynthesis; 3-deoxy-D-manno-octulosonate biosynthesis; 3-deoxy-D-manno-octulosonate from D-ribulose 5-phosphate: step 2/3. It functions in the pathway bacterial outer membrane biogenesis; lipopolysaccharide biosynthesis. This chain is 2-dehydro-3-deoxyphosphooctonate aldolase, found in Chlamydia abortus (strain DSM 27085 / S26/3) (Chlamydophila abortus).